The following is a 333-amino-acid chain: UPF0284 protein VNG_1572C (333 aa).

Belongs to the UPF0284 family.

The chain is UPF0284 protein VNG_1572C from Halobacterium salinarum (strain ATCC 700922 / JCM 11081 / NRC-1) (Halobacterium halobium).